Consider the following 1485-residue polypeptide: Chromosome partition protein MukB (1485 aa).

34–41 provides a ligand contact to ATP; the sequence is GGNGAGKS. Coiled-coil stretches lie at residues 337–480 and 509–605; these read LNLV…QAYQ and QHLA…PVWL. Residues 666-783 are flexible hinge; that stretch reads PSGAEDARLI…EVPLFGRAAR (118 aa). 2 coiled-coil regions span residues 835-915 and 977-1116; these read EAEI…IQQH and GMLT…AKAG.

It belongs to the SMC family. MukB subfamily. In terms of assembly, homodimerization via its hinge domain. Binds to DNA via its C-terminal region. Interacts, and probably forms a ternary complex, with MukE and MukF via its C-terminal region. The complex formation is stimulated by calcium or magnesium. Interacts with tubulin-related protein FtsZ.

It localises to the cytoplasm. It is found in the nucleoid. Its function is as follows. Plays a central role in chromosome condensation, segregation and cell cycle progression. Functions as a homodimer, which is essential for chromosome partition. Involved in negative DNA supercoiling in vivo, and by this means organize and compact chromosomes. May achieve or facilitate chromosome segregation by condensation DNA from both sides of a centrally located replisome during cell division. The protein is Chromosome partition protein MukB of Yersinia pseudotuberculosis serotype IB (strain PB1/+).